The primary structure comprises 93 residues: Mitochondrial import inner membrane translocase subunit TIM10 (93 aa).

An interaction with transmembrane regions of transmembrane proteins in transit region spans residues 1–31 (MSFLGFGGGQPQLSSQQKIQAAEAELDLVTD). Positions 40-65 (CYKKCINTSYSEGELNKNESSCLDRC) match the Twin CX3C motif motif. Disulfide bonds link C40–C65 and C44–C61. The segment at 73 to 93 (NVQVGENMQKMGQSFNAAGKF) is required for heterohexamerization.

The protein belongs to the small Tim family. In terms of assembly, heterohexamer; composed of 3 copies of TIM9 and 3 copies of TIM10, named soluble 70 kDa complex. Associates directly with the TIM12 component of the TIM22 complex, whose core is composed of TIM18, TIM22 and TIM54. Interacts with the transmembrane regions of multi-pass transmembrane proteins in transit.

The protein resides in the mitochondrion inner membrane. It is found in the mitochondrion intermembrane space. Functionally, mitochondrial intermembrane chaperone that participates in the import and insertion of multi-pass transmembrane proteins into the mitochondrial inner membrane. Also required for the transfer of beta-barrel precursors from the TOM complex to the sorting and assembly machinery (SAM complex) of the outer membrane. Acts as a chaperone-like protein that protects the hydrophobic precursors from aggregation and guide them through the mitochondrial intermembrane space. Compared to TIM9, it may function as a substrate sensor. The chain is Mitochondrial import inner membrane translocase subunit TIM10 (TIM10) from Saccharomyces cerevisiae (strain ATCC 204508 / S288c) (Baker's yeast).